The primary structure comprises 85 residues: Putative membrane protein insertion efficiency factor (85 aa).

It belongs to the UPF0161 family.

The protein resides in the cell inner membrane. Could be involved in insertion of integral membrane proteins into the membrane. This chain is Putative membrane protein insertion efficiency factor, found in Dictyoglomus thermophilum (strain ATCC 35947 / DSM 3960 / H-6-12).